Reading from the N-terminus, the 423-residue chain is Probable sucrose-phosphate synthase (423 aa).

It belongs to the glycosyltransferase 1 family.

The enzyme catalyses beta-D-fructose 6-phosphate + UDP-alpha-D-glucose = sucrose 6(F)-phosphate + UDP + H(+). Plays a role in sucrose synthesis by catalyzing the first step of sucrose biosynthesis from UDP-glucose and fructose-6-phosphate. This Thermosipho melanesiensis (strain DSM 12029 / CIP 104789 / BI429) protein is Probable sucrose-phosphate synthase.